The sequence spans 332 residues: L-lactate dehydrogenase A chain (332 aa).

Alanine 2 is modified (N-acetylalanine). Lysine 5 carries the post-translational modification N6-acetyllysine; alternate. Position 5 is an N6-succinyllysine; alternate (lysine 5). Lysine 14 is modified (N6-acetyllysine). 29–57 (GAVGMACAISILMKDLADEVALVDVMEDK) lines the NAD(+) pocket. Lysine 57 is modified (N6-acetyllysine; alternate). A Glycyl lysine isopeptide (Lys-Gly) (interchain with G-Cter in SUMO2); alternate cross-link involves residue lysine 57. Lysine 81 carries the post-translational modification N6-acetyllysine. Residue arginine 106 coordinates substrate. Lysine 118 bears the N6-acetyllysine; alternate mark. Residue lysine 118 is modified to N6-succinyllysine; alternate. Lysine 126 bears the N6-acetyllysine mark. Position 138 (asparagine 138) interacts with NAD(+). Substrate contacts are provided by asparagine 138 and arginine 169. Histidine 193 (proton acceptor) is an active-site residue. N6-acetyllysine is present on residues lysine 224 and lysine 232. A Phosphotyrosine modification is found at tyrosine 239. The residue at position 243 (lysine 243) is an N6-acetyllysine. Residue threonine 248 coordinates substrate. Phosphothreonine is present on threonine 309. Lysine 318 carries the N6-acetyllysine; alternate modification. Residue lysine 318 is modified to N6-succinyllysine; alternate. Threonine 322 bears the Phosphothreonine mark.

It belongs to the LDH/MDH superfamily. LDH family. In terms of assembly, homotetramer. Interacts with PTEN upstream reading frame protein MP31. Post-translationally, ISGylated.

The protein resides in the cytoplasm. It carries out the reaction (S)-lactate + NAD(+) = pyruvate + NADH + H(+). It functions in the pathway fermentation; pyruvate fermentation to lactate; (S)-lactate from pyruvate: step 1/1. Interconverts simultaneously and stereospecifically pyruvate and lactate with concomitant interconversion of NADH and NAD(+). The protein is L-lactate dehydrogenase A chain (LDHA) of Bos taurus (Bovine).